The chain runs to 339 residues: Glycerol-3-phosphate dehydrogenase [NAD(P)+] (339 aa).

4 residues coordinate NADPH: S15, Y16, H36, and K110. Sn-glycerol 3-phosphate-binding residues include K110, G139, and T141. Residue A143 participates in NADPH binding. 5 residues coordinate sn-glycerol 3-phosphate: K195, D248, S258, R259, and N260. The Proton acceptor role is filled by K195. NADPH is bound at residue R259. Residues V283 and E285 each contribute to the NADPH site.

It belongs to the NAD-dependent glycerol-3-phosphate dehydrogenase family.

It localises to the cytoplasm. The catalysed reaction is sn-glycerol 3-phosphate + NAD(+) = dihydroxyacetone phosphate + NADH + H(+). It catalyses the reaction sn-glycerol 3-phosphate + NADP(+) = dihydroxyacetone phosphate + NADPH + H(+). Its pathway is membrane lipid metabolism; glycerophospholipid metabolism. Functionally, catalyzes the reduction of the glycolytic intermediate dihydroxyacetone phosphate (DHAP) to sn-glycerol 3-phosphate (G3P), the key precursor for phospholipid synthesis. This is Glycerol-3-phosphate dehydrogenase [NAD(P)+] from Shigella dysenteriae serotype 1 (strain Sd197).